A 280-amino-acid polypeptide reads, in one-letter code: 2-dehydro-3-deoxyphosphooctonate aldolase (280 aa).

It belongs to the KdsA family.

It localises to the cytoplasm. It carries out the reaction D-arabinose 5-phosphate + phosphoenolpyruvate + H2O = 3-deoxy-alpha-D-manno-2-octulosonate-8-phosphate + phosphate. It functions in the pathway carbohydrate biosynthesis; 3-deoxy-D-manno-octulosonate biosynthesis; 3-deoxy-D-manno-octulosonate from D-ribulose 5-phosphate: step 2/3. Its pathway is bacterial outer membrane biogenesis; lipopolysaccharide biosynthesis. In Coxiella burnetii (strain CbuG_Q212) (Coxiella burnetii (strain Q212)), this protein is 2-dehydro-3-deoxyphosphooctonate aldolase.